The primary structure comprises 527 residues: Sensory neuron membrane protein 1 (527 aa).

The Cytoplasmic portion of the chain corresponds to 1–10 (MQLQKPLKIG). Residues 11–31 (LGMMGAGLFGIIFGWVLFPVI) form a helical membrane-spanning segment. Residues 32 to 456 (LKSQLKKEMA…LKNQLFIPKR (425 aa)) lie on the Extracellular side of the membrane. 2 N-linked (GlcNAc...) asparagine glycosylation sites follow: N67 and N229. 3 disulfides stabilise this stretch: C268-C333, C297-C352, and C335-C341. N-linked (GlcNAc...) asparagine glycosylation is present at N440. A helical membrane pass occupies residues 457–477 (IVSVVKWLLAGVGFVGLVGSL). The Cytoplasmic portion of the chain corresponds to 478 to 527 (VYQFKGKMINFALSPSSAPVTKVNPEINQQNQPKDISIIGESQNPPKVDM).

The protein belongs to the CD36 family. As to expression, principal component of the olfactory cilia membrane. Localizes to the antennal tissue with two to three fold higher expression in males compared to females.

It is found in the cell membrane. Functionally, plays an olfactory role that is not restricted to pheromone sensitivity. This Ostrinia nubilalis (European corn borer) protein is Sensory neuron membrane protein 1.